The chain runs to 412 residues: L-threonine:uridine-5'-aldehyde transaldolase (412 aa).

Lys229 is subject to N6-(pyridoxal phosphate)lysine.

It belongs to the SHMT family. Pyridoxal 5'-phosphate is required as a cofactor.

It carries out the reaction uridine-5'-aldehyde + L-threonine = (5'S,6'S)-C-glycyluridine + acetaldehyde. Its pathway is antibiotic biosynthesis. Transaldolase involved in the biosynthesis of the capuramycin-type nucleoside antibiotic A-102395. Catalyzes the condensation of L-threonine and uridine-5'-aldehyde to form 5'-C-glycyluridine (GlyU). The polypeptide is L-threonine:uridine-5'-aldehyde transaldolase (Amycolatopsis sp).